Here is a 154-residue protein sequence, read N- to C-terminus: Transcriptional repressor NrdR (154 aa).

A zinc finger spans residues 3-34; it reads CPFCGANDTKVIDSRLVAEGEQVRRRRECLAC. The ATP-cone domain maps to 49–139; it reads PRLIKQDGSR…VYRRFQDLNE (91 aa).

This sequence belongs to the NrdR family. The cofactor is Zn(2+).

Functionally, negatively regulates transcription of bacterial ribonucleotide reductase nrd genes and operons by binding to NrdR-boxes. The chain is Transcriptional repressor NrdR from Pseudomonas syringae pv. tomato (strain ATCC BAA-871 / DC3000).